The chain runs to 824 residues: Type IV secretion system protein PtlC homolog (824 aa).

Gly456–Thr463 contacts ATP.

This sequence belongs to the TrbE/VirB4 family.

The protein localises to the cell membrane. In Bordetella bronchiseptica (strain ATCC BAA-588 / NCTC 13252 / RB50) (Alcaligenes bronchisepticus), this protein is Type IV secretion system protein PtlC homolog (ptlC).